The primary structure comprises 607 residues: MCGIIGILGKKCVASSLIAGLKRLEYRGYDSSGIATVHNGRLYRVRAEGKLVHLEEKLKKTPLKGSLGIGHTRWATHGVAVERNAHPHVTERLAIVHNGIIENFVELQKELIEEGYTFETETDTEVIAHLITRALKSGLSQQEAIRTSWKRLQGAFAIVVIFEGQDNLMIAARSGPPLAIGYGQDEFFVGSDAVALASFVDRISYMEDGDWAVLTREGVTIYGADNQPVKRPITTLFEGTLLVSKGNHRHFMHKEMFEQPEVISHNLAHYLDLGNYTVRSLKNLIDWKKINRILFASCGTAYYSTLVARYWFENFAALSVDNDIASEFRYREPPITSDVLSVFVSQSGETADTLACLRYCREHGVKTATIVNVEQSTMAREADFILPTRAGPEIGVASTKAFTCQLATLAAMALDAAKQRGSLSEKAEHQFVQQLAEVPRILNEVLKLDDKIEQICRDLVNVRGVLYLGRGTSYPIALEGALKLKELSYIHAEGYAAGELKHGPIALVDEAIPVIVVAPYDRWFEKTFSNMQEVAARNGRIILITDKRGAEVAGLDTLSTIVLPNIPEFIAPIIYALPIQLIAYHTAVLLGTDVDQPRNLAKSVTVE.

The active-site Nucleophile; for GATase activity is Cys2. The Glutamine amidotransferase type-2 domain maps to Cys2–Glu217. 2 consecutive SIS domains span residues Thr277–Ser422 and Ile455–Pro597. Lys602 functions as the For Fru-6P isomerization activity in the catalytic mechanism.

In terms of assembly, homodimer.

The protein localises to the cytoplasm. The catalysed reaction is D-fructose 6-phosphate + L-glutamine = D-glucosamine 6-phosphate + L-glutamate. In terms of biological role, catalyzes the first step in hexosamine metabolism, converting fructose-6P into glucosamine-6P using glutamine as a nitrogen source. This Bartonella quintana (strain Toulouse) (Rochalimaea quintana) protein is Glutamine--fructose-6-phosphate aminotransferase [isomerizing].